Consider the following 453-residue polypeptide: Bifunctional protein GlmU (453 aa).

The segment at 1–231 is pyrophosphorylase; it reads MERTCLAVIL…EIEMTGCNTR (231 aa). UDP-N-acetyl-alpha-D-glucosamine contacts are provided by residues 10 to 13, K24, Q77, 82 to 83, 105 to 107, G143, E157, N172, and N229; these read LAAG, GT, and YGD. Position 107 (D107) interacts with Mg(2+). Residue N229 coordinates Mg(2+). The interval 232-252 is linker; it reads AELAVIERFWQERRRHQLMLS. The N-acetyltransferase stretch occupies residues 253–453; the sequence is GVTMIAPETV…ATKAAKKAKG (201 aa). Residues R318 and K336 each coordinate UDP-N-acetyl-alpha-D-glucosamine. Residue H348 is the Proton acceptor of the active site. 2 residues coordinate UDP-N-acetyl-alpha-D-glucosamine: Y351 and N362. Acetyl-CoA is bound by residues A365, 371–372, S390, S408, and R425; that span reads NY.

It in the N-terminal section; belongs to the N-acetylglucosamine-1-phosphate uridyltransferase family. The protein in the C-terminal section; belongs to the transferase hexapeptide repeat family. Homotrimer. The cofactor is Mg(2+).

It localises to the cytoplasm. The catalysed reaction is alpha-D-glucosamine 1-phosphate + acetyl-CoA = N-acetyl-alpha-D-glucosamine 1-phosphate + CoA + H(+). The enzyme catalyses N-acetyl-alpha-D-glucosamine 1-phosphate + UTP + H(+) = UDP-N-acetyl-alpha-D-glucosamine + diphosphate. It participates in nucleotide-sugar biosynthesis; UDP-N-acetyl-alpha-D-glucosamine biosynthesis; N-acetyl-alpha-D-glucosamine 1-phosphate from alpha-D-glucosamine 6-phosphate (route II): step 2/2. It functions in the pathway nucleotide-sugar biosynthesis; UDP-N-acetyl-alpha-D-glucosamine biosynthesis; UDP-N-acetyl-alpha-D-glucosamine from N-acetyl-alpha-D-glucosamine 1-phosphate: step 1/1. The protein operates within bacterial outer membrane biogenesis; LPS lipid A biosynthesis. Catalyzes the last two sequential reactions in the de novo biosynthetic pathway for UDP-N-acetylglucosamine (UDP-GlcNAc). The C-terminal domain catalyzes the transfer of acetyl group from acetyl coenzyme A to glucosamine-1-phosphate (GlcN-1-P) to produce N-acetylglucosamine-1-phosphate (GlcNAc-1-P), which is converted into UDP-GlcNAc by the transfer of uridine 5-monophosphate (from uridine 5-triphosphate), a reaction catalyzed by the N-terminal domain. The protein is Bifunctional protein GlmU of Rhizobium leguminosarum bv. trifolii (strain WSM2304).